We begin with the raw amino-acid sequence, 428 residues long: Tol-Pal system protein TolB (428 aa).

The N-terminal stretch at 1–24 is a signal peptide; that stretch reads MPSLKTLLRGVLVAAMLVAGSARA.

It belongs to the TolB family. As to quaternary structure, the Tol-Pal system is composed of five core proteins: the inner membrane proteins TolA, TolQ and TolR, the periplasmic protein TolB and the outer membrane protein Pal. They form a network linking the inner and outer membranes and the peptidoglycan layer.

The protein resides in the periplasm. Its function is as follows. Part of the Tol-Pal system, which plays a role in outer membrane invagination during cell division and is important for maintaining outer membrane integrity. In Chromobacterium violaceum (strain ATCC 12472 / DSM 30191 / JCM 1249 / CCUG 213 / NBRC 12614 / NCIMB 9131 / NCTC 9757 / MK), this protein is Tol-Pal system protein TolB.